Reading from the N-terminus, the 946-residue chain is Phosphatidylinositol 4,5-bisphosphate 5-phosphatase INP51 (946 aa).

One can recognise an SAC domain in the interval 151–480; the sequence is LKKLFSDGTF…YYWLDRTYTK (330 aa). 2 disordered regions span residues 872–902 and 927–946; these read SDSIAGPTHSPTPIPEPKRGRKLPPPSSDLK and PKRDPNPFVENEDEPLFIER. Positions 936–946 are enriched in acidic residues; sequence ENEDEPLFIER.

The protein belongs to the synaptojanin family. It in the central section; belongs to the inositol 1,4,5-trisphosphate 5-phosphatase family. In terms of assembly, interacts with IRS4 and TAX4.

It localises to the cytoplasm. The protein resides in the cytoskeleton. It is found in the actin patch. It catalyses the reaction a 1,2-diacyl-sn-glycero-3-phospho-(1D-myo-inositol-4,5-bisphosphate) + H2O = a 1,2-diacyl-sn-glycero-3-phospho-(1D-myo-inositol 4-phosphate) + phosphate. Its activity is regulated as follows. IRS4 and TAX4 are both positive regulator of INP51 activity and phosphatidylinositol 4,5-bisphosphate turnover. Controls the cellular levels and subcellular distribution of phosphatidylinositol 4,5-bisphosphate (PtdIns(4,5)P2). Does not utilize phosphatidylinositol 3,5-bisphosphate (PtdIns(3,5)P2), nor phosphatidylinositol 3-phosphate (PtdIns(3)P) and phosphatidylinositol 4-phosphate (PtdIns(4)P). Plays an essential role in a TGN (trans Golgi network)-to-early endosome pathway. Involved in endocytosis and acts as a negative regulator of the Slm pathway which modulates polarized actin assembly and growth. This chain is Phosphatidylinositol 4,5-bisphosphate 5-phosphatase INP51 (INP51), found in Saccharomyces cerevisiae (strain ATCC 204508 / S288c) (Baker's yeast).